The chain runs to 199 residues: Protein Thf1 (199 aa).

A coiled-coil region spans residues 167 to 198; that stretch reads QYSRVEKDISMYKSNIEKMKQALEIIALNLKT.

Belongs to the THF1 family.

In terms of biological role, may be involved in photosynthetic membrane biogenesis. The polypeptide is Protein Thf1 (Prochlorococcus marinus (strain NATL1A)).